The chain runs to 205 residues: Non-structural protein NS3 (205 aa).

Residues 177 to 205 (GTRSPETGCRKVTSGLPHGASGGSGTRQG) are disordered. Gly residues predominate over residues 196 to 205 (ASGGSGTRQG).

This sequence belongs to the orbivirus NS3 family.

Its function is as follows. May play a role in the release of virions from infected cells. This is Non-structural protein NS3 (Segment-10) from Broadhaven virus (BRD).